Reading from the N-terminus, the 192-residue chain is Imidazoleglycerol-phosphate dehydratase (192 aa).

It belongs to the imidazoleglycerol-phosphate dehydratase family.

It is found in the cytoplasm. The catalysed reaction is D-erythro-1-(imidazol-4-yl)glycerol 3-phosphate = 3-(imidazol-4-yl)-2-oxopropyl phosphate + H2O. It participates in amino-acid biosynthesis; L-histidine biosynthesis; L-histidine from 5-phospho-alpha-D-ribose 1-diphosphate: step 6/9. The polypeptide is Imidazoleglycerol-phosphate dehydratase (Clostridioides difficile (strain 630) (Peptoclostridium difficile)).